A 527-amino-acid polypeptide reads, in one-letter code: Catalase (527 aa).

A2 is subject to N-acetylalanine. S9 bears the Phosphoserine mark. Catalysis depends on residues H75 and N148. Positions 194, 201, 203, and 213 each coordinate NADP(+). N6-succinyllysine is present on K221. Residue K233 is modified to N6-acetyllysine. K237, W303, H305, and K306 together coordinate NADP(+). K306 is modified (N6-acetyllysine; alternate). Residue K306 is modified to N6-succinyllysine; alternate. Y358 contacts heme. Phosphoserine is present on residues S417 and S422. Residue K480 is modified to N6-acetyllysine; alternate. Position 480 is an N6-succinyllysine; alternate (K480). K499 bears the N6-acetyllysine mark. Position 511 is a phosphothreonine (T511). A phosphoserine mark is found at S515 and S517. The short motif at 524–527 (KANL) is the Microbody targeting signal; atypical element.

Belongs to the catalase family. As to quaternary structure, homotetramer. Interacts (via microbody targeting signal) with PEX5, monomeric form interacts with PEX5, leading to its translocation into peroxisomes. It depends on heme as a cofactor. Requires NADP(+) as cofactor.

Its subcellular location is the peroxisome matrix. It catalyses the reaction 2 H2O2 = O2 + 2 H2O. Catalyzes the degradation of hydrogen peroxide (H(2)O(2)) generated by peroxisomal oxidases to water and oxygen, thereby protecting cells from the toxic effects of hydrogen peroxide. Promotes growth of cells including T-cells, B-cells, myeloid leukemia cells, melanoma cells, mastocytoma cells and normal and transformed fibroblast cells. The chain is Catalase (CAT) from Homo sapiens (Human).